A 530-amino-acid chain; its full sequence is TNF receptor-associated factor 6 (530 aa).

Positions 1-362 are interaction with TAX1BP1; it reads MSLLNCENSC…EAQQCNGIYI (362 aa). Residues 70–109 form an RING-type; degenerate zinc finger; it reads CPICLMALREAVQTPCGHRFCKACITKSIRDAGHKCPVDN. Lys124 participates in a covalent cross-link: Glycyl lysine isopeptide (Lys-Gly) (interchain with G-Cter in SUMO); alternate. Lys124 is covalently cross-linked (Glycyl lysine isopeptide (Lys-Gly) (interchain with G-Cter in ubiquitin); alternate). A Glycyl lysine isopeptide (Lys-Gly) (interchain with G-Cter in SUMO) cross-link involves residue Lys142. 2 consecutive TRAF-type zinc fingers follow at residues 150–202 and 203–259; these read DHQV…EEKE and IHDQ…NHLA. Positions 302–356 form a coiled coil; that stretch reads NYEETVKQLEGRLVRQDHQIRELTAKMETQSMHVSELKRTIRSLEDKVAEMEAQQ. A Glycyl lysine isopeptide (Lys-Gly) (interchain with G-Cter in ubiquitin) cross-link involves residue Lys327. One can recognise an MATH domain in the interval 358–507; it reads NGIYIWKIGN…DDTLLVRCEV (150 aa). The interaction with TANK stretch occupies residues 363–530; sequence WKIGNFGMHL…FQPRSTDAGV (168 aa). Lys461 is covalently cross-linked (Glycyl lysine isopeptide (Lys-Gly) (interchain with G-Cter in SUMO)).

Belongs to the TNF receptor-associated factor family. A subfamily. In terms of assembly, homotrimer. Homooligomer. N-terminal region is dimeric while C-terminal region is trimeric; maybe providing a mode of oligomerization. Upon IL1B treatment, forms a complex with PELI1, IRAK1, IRAK4 and MYD88; this complex recruits MAP3K7/TAK1, TAB1 and TAB2 to mediate NF-kappa-B activation. Direct binding of SMAD6 to PELI1 prevents the complex formation and hence negatively regulates IL1R-TLR signaling and eventually NF-kappa-B-mediated gene expression. Binds to TNFRSF5/CD40 and TNFRSF11A/RANK. Associates with NGFR, TNFRSF17, IRAK2, IRAK3, RIPK2, MAP3K1, MAP3K5, MAP3K14, CSK, TRAF, TRAF-interacting protein TRIP and TNF receptor associated protein TDP2. Interacts with IL17R. Interacts with SQSTM1 bridging NTRK1 and NGFR. Forms a ternary complex with SQSTM1 and PRKCZ. Interacts with PELI2 and PELI3. Binds UBE2V1. Interacts with TAX1BP1; this interaction mediates deubiquitination of TRAF6 and inhibition of NF-kappa-B activation. Interacts with ZNF675. Interacts with ARRB1 and ARRB2. Interacts with MAP3K7 and TAB1/MAP3K7IP1; during IL-1 signaling. Interacts with UBE2N. Interacts with TGFBR1, HDAC1 and RANGAP1. Interacts with AKT1, AKT2 and AKT3. Interacts (via TRAF domains) with NUMBL (via C-terminal). Interacts with RBCK1. Interacts with LIMD1 (via LIM domains). Interacts with RSAD2/viperin. Interacts (via C-terminus) with EIF2AK2/PKR (via the kinase catalytic domain). Interacts with ZFAND5. Interacts with IL1RL1. Interacts with TRAFD1. Interacts with AJUBA. Interacts with MAVS/IPS1. Interacts (via TRAF domains) with DYNC2I2 (via WD domains). Interacts with IFIT3 (via N-terminus). Interacts with TICAM2. Interacts with CARD14. Interacts with CD40 and MAP3K8; the interaction is required for ERK activation. Interacts with TICAM1 and this interaction is enhanced in the presence of WDFY1. Interacts with TANK; this interaction increases in response to DNA damage. Interacts with USP10; this interaction increases in response to DNA damage. Interacts with ZC3H12A; this interaction increases in response to DNA damage and is stimulated by TANK. Interacts with WDFY3. Interacts with TRIM13. Interacts with GPS2. Interacts (via C-terminus) with SASH1. Interacts with LRRC19. Interacts with IL17RA and TRAF3IP2. Interacts with TOMM70. Interacts with AMBRA1; interaction is required to mediate 'Lys-63'-linked ubiquitination of ULK1. Interacts with CRBN; this interaction inhibits TLR4-mediated signaling by preventing TRAF6-mediated ubiquitination of ECSIT. In terms of processing, sumoylated on Lys-124, Lys-142 and Lys-461 with SUMO1. Post-translationally, polyubiquitinated on Lys-124 by TRAF3IP2; after cell stimulation with IL17A. Polyubiquitinated; after cell stimulation with IL1B or TGFB. This ligand-induced cell stimulation leads to dimerization/oligomerization of TRAF6 molecules, followed by auto-ubiquitination which involves UBE2N and UBE2V1 and leads to TRAF6 activation. This 'Lys-63' site-specific poly-ubiquitination appears to be associated with the activation of signaling molecules. Endogenous autoubiquitination occurs only for the cytoplasmic form. Deubiquitinated by USP10 in a TANK-dependent manner, leading to the negative regulation of NF-kappa-B signaling upon DNA damage. LRRC19 induces 'Lys-63' ubiquitination. Ubiquitinated at Lys-327 by the SCF(FBXL2) complex, leading to its degradation by the proteasome.

Its subcellular location is the cytoplasm. The protein resides in the cell cortex. The protein localises to the nucleus. It is found in the lipid droplet. It catalyses the reaction S-ubiquitinyl-[E2 ubiquitin-conjugating enzyme]-L-cysteine + [acceptor protein]-L-lysine = [E2 ubiquitin-conjugating enzyme]-L-cysteine + N(6)-ubiquitinyl-[acceptor protein]-L-lysine.. The protein operates within protein modification; protein ubiquitination. Its function is as follows. E3 ubiquitin ligase that, together with UBE2N and UBE2V1, mediates the synthesis of 'Lys-63'-linked-polyubiquitin chains conjugated to proteins, such as ECSIT, IKBKG, IRAK1, AKT1 and AKT2. Also mediates ubiquitination of free/unanchored polyubiquitin chain that leads to MAP3K7 activation. Leads to the activation of NF-kappa-B and JUN. Seems to also play a role in dendritic cells (DCs) maturation and/or activation. Represses c-Myb-mediated transactivation, in B-lymphocytes. Adapter protein that seems to play a role in signal transduction initiated via TNF receptor, IL-1 receptor and IL-17 receptor. Regulates osteoclast differentiation by mediating the activation of adapter protein complex 1 (AP-1) and NF-kappa-B, in response to RANK-L stimulation. Together with MAP3K8, mediates CD40 signals that activate ERK in B-cells and macrophages, and thus may play a role in the regulation of immunoglobulin production. Acts as a regulator of the JNK and NF-kappa-B signaling pathways by initiating assembly of heterotypic 'Lys-63'-/'Lys-48'-linked branched ubiquitin chains that are then recognized by TAB2: TRAF6 catalyzes initial 'Lys-63'-linked-polyubiquitin chains that are then branched via 'Lys-48'-linked polyubiquitin by HUWE1. 'Lys-63'-/'Lys-48'-linked branched ubiquitin chains protect 'Lys-63'-linkages from CYLD deubiquitination. Also participates in the TCR signaling by ubiquitinating LAT. This is TNF receptor-associated factor 6 (Traf6) from Rattus norvegicus (Rat).